A 79-amino-acid chain; its full sequence is MORN repeat-containing protein 2 (79 aa).

MORN repeat units follow at residues 15 to 36 and 38 to 55; these read YEGQ…PNGA and YTGN…EYTD.

It localises to the cytoplasmic vesicle. It is found in the secretory vesicle. The protein localises to the acrosome. The protein resides in the nucleus. In terms of biological role, might have a role in spermatogenesis. The sequence is that of MORN repeat-containing protein 2 from Homo sapiens (Human).